The primary structure comprises 151 residues: Cytochrome c oxidase-assembly factor COX23, mitochondrial (151 aa).

The N-terminal 10 residues, 1 to 10, are a transit peptide targeting the mitochondrion; that stretch reads MEKPSPTRRQ. The segment at 1–86 is disordered; it reads MEKPSPTRRQ…QYYPDDPENP (86 aa). Polar residues predominate over residues 7–18; sequence TRRQTSSLSTIS. Positions 19-51 are enriched in low complexity; that stretch reads NGMTMTNDNRDTTNTNSGSTSSNNSQPSSSSTP. One can recognise a CHCH domain in the interval 101-143; that stretch reads YDPCEESSKLSFQCLERNDYDRSKCQEYFDAYRECKKQWLTAR. 2 consecutive short sequence motifs (cx9C motif) follow at residues 104 to 114 and 125 to 135; these read CEESSKLSFQC and CQEYFDAYREC. Disulfide bonds link Cys-104–Cys-135 and Cys-114–Cys-125.

Belongs to the COX23 family.

It localises to the cytoplasm. Its subcellular location is the mitochondrion intermembrane space. Required for the assembly of cytochrome c oxidase. The chain is Cytochrome c oxidase-assembly factor COX23, mitochondrial (COX23) from Saccharomyces cerevisiae (strain ATCC 204508 / S288c) (Baker's yeast).